Here is a 375-residue protein sequence, read N- to C-terminus: Growth/differentiation factor 8 (375 aa).

Positions Met1–Ala18 are cleaved as a signal peptide. Residues Gly19–Arg266 constitute a propeptide that is removed on maturation. Asn71 is a glycosylation site (N-linked (GlcNAc...) asparagine). Cystine bridges form between Cys272–Cys282, Cys281–Cys340, Cys309–Cys372, and Cys313–Cys374.

This sequence belongs to the TGF-beta family. As to quaternary structure, homodimer; disulfide-linked. Interacts with WFIKKN2, leading to inhibit its activity. Interacts with FSTL3. Post-translationally, synthesized as large precursor molecule that undergoes proteolytic cleavage to generate an N-terminal propeptide and a disulfide linked C-terminal dimer, which is the biologically active molecule. The circulating form consists of a latent complex of the C-terminal dimer and other proteins, including its propeptide, which maintain the C-terminal dimer in a latent, inactive state. Ligand activation requires additional cleavage of the prodomain by a tolloid-like metalloproteinase.

The protein localises to the secreted. Functionally, acts specifically as a negative regulator of skeletal muscle growth. The chain is Growth/differentiation factor 8 (MSTN) from Lepus capensis (Brown hare).